The following is a 229-amino-acid chain: PKHD-type hydroxylase OCAR_6723/OCA5_c13470 (229 aa).

In terms of domain architecture, Fe2OG dioxygenase spans 78-180 (HIFPPLFNRY…RVASFFWLQS (103 aa)). Residues His-98, Asp-100, and His-161 each coordinate Fe cation. 2-oxoglutarate is bound at residue Arg-171.

Fe(2+) is required as a cofactor. L-ascorbate serves as cofactor.

This chain is PKHD-type hydroxylase OCAR_6723/OCA5_c13470, found in Afipia carboxidovorans (strain ATCC 49405 / DSM 1227 / KCTC 32145 / OM5) (Oligotropha carboxidovorans).